Here is a 4450-residue protein sequence, read N- to C-terminus: Gramicidin S synthase 2 (4450 aa).

Positions 467–1044 (DKTIHQLFTE…IQEISNYING (578 aa)) are domain 1 (proline-activating). 4 Carrier domains span residues 971 to 1046 (VPTN…NGAK), 2006 to 2081 (APSS…ADGE), 3051 to 3126 (APRT…EETD), and 4089 to 4164 (APRN…THQE). O-(pantetheine 4'-phosphoryl)serine is present on residues serine 1006, serine 2041, serine 3086, and serine 4124. The interval 1521-2080 (DHVAVGWKDQ…SALAQYIADG (560 aa)) is domain 2 (valine-activating). Residues 2538–3134 (YATNKIFHEL…TDTEQYMAIQ (597 aa)) form a domain 3 (ornithine-activating) region. The domain 4 (leucine-activating) stretch occupies residues 3590–4172 (IQELFEEQVK…QESENNVHQP (583 aa)).

It belongs to the ATP-dependent AMP-binding enzyme family. As to quaternary structure, large multienzyme complex of GrsA and GrsB. Requires pantetheine 4'-phosphate as cofactor.

It functions in the pathway antibiotic biosynthesis; gramicidin S biosynthesis. Its function is as follows. This protein is a multifunctional enzyme, able to activate and polymerize the amino acids Pro, Val, Orn and Leu. Activation sites for these AA consist of individual domains. The polypeptide is Gramicidin S synthase 2 (grsB) (Brevibacillus brevis (Bacillus brevis)).